The following is a 465-amino-acid chain: Glutamyl-tRNA reductase 2 (465 aa).

Residues 62 to 65 (TCNR), serine 122, 127 to 129 (EGQ), and glutamine 133 contribute to the substrate site. Catalysis depends on cysteine 63, which acts as the Nucleophile. NADP(+) is bound at residue 204-209 (GAGKMG).

The protein belongs to the glutamyl-tRNA reductase family.

The protein resides in the plastid. The protein localises to the chloroplast. It carries out the reaction (S)-4-amino-5-oxopentanoate + tRNA(Glu) + NADP(+) = L-glutamyl-tRNA(Glu) + NADPH + H(+). It participates in porphyrin-containing compound metabolism; protoporphyrin-IX biosynthesis; 5-aminolevulinate from L-glutamyl-tRNA(Glu): step 1/2. Catalyzes the NADPH-dependent reduction of glutamyl-tRNA(Glu) to glutamate 1-semialdehyde (GSA). The polypeptide is Glutamyl-tRNA reductase 2 (HEMA2) (Hordeum vulgare (Barley)).